The sequence spans 79 residues: uncharacterized protein (79 aa).

The region spanning 10 to 60 (EAVLTMDSKGQILLPKELRERAGLKAGDRLVAIAGCDENEEVCCLILVKAE) is the SpoVT-AbrB domain.

This is an uncharacterized protein from Archaeoglobus fulgidus (strain ATCC 49558 / DSM 4304 / JCM 9628 / NBRC 100126 / VC-16).